The primary structure comprises 493 residues: Lysine--tRNA ligase (493 aa).

Mg(2+) is bound by residues Glu406 and Glu413.

It belongs to the class-II aminoacyl-tRNA synthetase family. In terms of assembly, homodimer. The cofactor is Mg(2+).

It localises to the cytoplasm. It carries out the reaction tRNA(Lys) + L-lysine + ATP = L-lysyl-tRNA(Lys) + AMP + diphosphate. The chain is Lysine--tRNA ligase from Leuconostoc citreum (strain KM20).